We begin with the raw amino-acid sequence, 360 residues long: Peptide chain release factor 1 (360 aa).

Glutamine 235 carries the N5-methylglutamine modification. The tract at residues 284–313 (AKRQQAEASTRRNLLGSGDRSDRNRTYNFP) is disordered.

It belongs to the prokaryotic/mitochondrial release factor family. Methylated by PrmC. Methylation increases the termination efficiency of RF1.

The protein localises to the cytoplasm. In terms of biological role, peptide chain release factor 1 directs the termination of translation in response to the peptide chain termination codons UAG and UAA. The chain is Peptide chain release factor 1 from Escherichia coli (strain UTI89 / UPEC).